Here is a 480-residue protein sequence, read N- to C-terminus: Glutamyl-tRNA(Gln) amidotransferase subunit A (480 aa).

Catalysis depends on charge relay system residues Lys79 and Ser154. The segment at 133-156 (NENSAYGPVRNPRDKSRVPGGSSG) is disordered. The active-site Acyl-ester intermediate is Ser178.

It belongs to the amidase family. GatA subfamily. Heterotrimer of A, B and C subunits.

It carries out the reaction L-glutamyl-tRNA(Gln) + L-glutamine + ATP + H2O = L-glutaminyl-tRNA(Gln) + L-glutamate + ADP + phosphate + H(+). Functionally, allows the formation of correctly charged Gln-tRNA(Gln) through the transamidation of misacylated Glu-tRNA(Gln) in organisms which lack glutaminyl-tRNA synthetase. The reaction takes place in the presence of glutamine and ATP through an activated gamma-phospho-Glu-tRNA(Gln). The protein is Glutamyl-tRNA(Gln) amidotransferase subunit A of Koribacter versatilis (strain Ellin345).